The sequence spans 94 residues: Co-chaperonin GroES (94 aa).

The protein belongs to the GroES chaperonin family. Heptamer of 7 subunits arranged in a ring. Interacts with the chaperonin GroEL.

The protein localises to the cytoplasm. Functionally, together with the chaperonin GroEL, plays an essential role in assisting protein folding. The GroEL-GroES system forms a nano-cage that allows encapsulation of the non-native substrate proteins and provides a physical environment optimized to promote and accelerate protein folding. GroES binds to the apical surface of the GroEL ring, thereby capping the opening of the GroEL channel. The protein is Co-chaperonin GroES of Ruminiclostridium cellulolyticum (strain ATCC 35319 / DSM 5812 / JCM 6584 / H10) (Clostridium cellulolyticum).